Here is a 730-residue protein sequence, read N- to C-terminus: Semaphorin-1A (730 aa).

Positions Met-1–Ala-20 are cleaved as a signal peptide. Topologically, residues Trp-21 to Thr-630 are extracellular. The 463-residue stretch at Lys-28–Leu-490 folds into the Sema domain. N-linked (GlcNAc...) asparagine glycans are attached at residues Asn-44 and Asn-71. Intrachain disulfides connect Cys-97/Cys-107 and Cys-125/Cys-134. N-linked (GlcNAc...) asparagine glycosylation is found at Asn-163 and Asn-267. Cystine bridges form between Cys-244–Cys-358 and Cys-268–Cys-317. Residue Asn-360 is glycosylated (N-linked (GlcNAc...) asparagine). Disulfide bonds link Cys-493–Cys-512 and Cys-504–Cys-521. Asn-539 carries N-linked (GlcNAc...) asparagine glycosylation. The helical transmembrane segment at Ile-631–Phe-651 threads the bilayer. The Cytoplasmic segment spans residues Ser-652–Ile-730. Low complexity predominate over residues Ala-708–Lys-720. Residues Ala-708–Ile-730 are disordered.

It belongs to the semaphorin family. As to expression, dynamically expressed on a subset of axon pathways in the developing CNS and on circumferential bands of epithelial cells in developing limb buds.

It is found in the membrane. Its function is as follows. Plays a role in growth cones guidance. This Schistocerca americana (American grasshopper) protein is Semaphorin-1A (SEMA-1A).